A 1011-amino-acid polypeptide reads, in one-letter code: Lysosomal alpha-mannosidase (1011 aa).

Residues 1 to 49 (MGAYARASGVCARGCLDSAGPWTMSRALRPPLPPLCFFLLLLAAAGARA) form the signal peptide. Disulfide bonds link Cys-55/Cys-358 and Cys-268/Cys-273. Residues His-72 and Asp-74 each contribute to the Zn(2+) site. A glycan (N-linked (GlcNAc...) asparagine) is linked at Asn-133. Asp-196 is a Zn(2+) binding site. Asp-196 functions as the Nucleophile in the catalytic mechanism. Residues Asn-310 and Asn-367 are each glycosylated (N-linked (GlcNAc...) asparagine). Intrachain disulfides connect Cys-412–Cys-472 and Cys-493–Cys-501. His-446 provides a ligand contact to Zn(2+). N-linked (GlcNAc...) asparagine glycans are attached at residues Asn-497, Asn-645, Asn-651, Asn-692, Asn-766, Asn-832, Asn-930, and Asn-989.

The protein belongs to the glycosyl hydrolase 38 family. The cofactor is Zn(2+). Post-translationally, first processed into 3 peptides of 70 kDa, 42 kDa (D) and 13/15 kDa (E). The 70 kDa peptide is further processed into three peptides (A, B and C). The A, B and C peptides are disulfide-linked. In terms of processing, heavily glycosylated.

It localises to the lysosome. It catalyses the reaction Hydrolysis of terminal, non-reducing alpha-D-mannose residues in alpha-D-mannosides.. Functionally, necessary for the catabolism of N-linked carbohydrates released during glycoprotein turnover. Cleaves all known types of alpha-mannosidic linkages. The polypeptide is Lysosomal alpha-mannosidase (MAN2B1) (Homo sapiens (Human)).